Consider the following 381-residue polypeptide: Phthiodiolone/phenolphthiodiolone dimycocerosates ketoreductase (381 aa).

It belongs to the mer family. Phthiodiolone/phenolphthiodiolone dimycocerosates ketoreductase subfamily.

Functionally, catalyzes the reduction of the keto moiety of phthiodiolone dimycocerosates (DIM B) and glycosylated phenolphthiodiolone dimycocerosates to form the intermediate compounds phthiotriol and glycosylated phenolphthiotriol dimycocerosates during phthiocerol dimycocerosates (DIM A) and glycosylated phenolphthiocerol dimycocerosates (PGL) biosynthesis. The sequence is that of Phthiodiolone/phenolphthiodiolone dimycocerosates ketoreductase from Mycobacterium bovis (strain ATCC BAA-935 / AF2122/97).